Consider the following 126-residue polypeptide: 13 kDa ribonucleoprotein-associated protein (126 aa).

It belongs to the eukaryotic ribosomal protein eL8 family. Component of the U3 snoRNP particle. Binds to the C'/D and B/C motifs in U3 snoRNA. Component of the 25S U4/U6.U5 tri-snRNP particle, a subcomplex of the spliceosome. Binds to the 5' stem-loop of U4 snRNA.

It localises to the nucleus. The protein localises to the nucleolus. In terms of biological role, common component of the spliceosome and rRNA processing machinery. In association with the spliceosomal U4/U6.U5 tri-snRNP particle, required for splicing of pre-mRNA. In association with box C/D snoRNPs, required for processing of pre-ribosomal RNA (rRNA) and site-specific 2'-O-methylation of substrate RNAs. Essential for the accumulation and stability of U4 snRNA, U6 snRNA, and box C/D snoRNAs. The polypeptide is 13 kDa ribonucleoprotein-associated protein (SNU13) (Mycosarcoma maydis (Corn smut fungus)).